A 180-amino-acid polypeptide reads, in one-letter code: MSDERITVVNKWDGPTVKNGLDEVVKKILNDKVGWTEQHNLMNLRLLISFIGVAFSAFACGYDFYAPFPKSKIVLLVCSVSYFICMGVLQLFQWYVEKDCFYEANEVDGKQTRKWAWSSEIKAHDDKYVLSAEFKKEGRSGQGKIIKSIGAYIDNDGEIMIPLVQREVDDLWARLIRSEQ.

Over 1-45 the chain is Cytoplasmic; the sequence is MSDERITVVNKWDGPTVKNGLDEVVKKILNDKVGWTEQHNLMNLR. The helical transmembrane segment at 46–66 threads the bilayer; sequence LLISFIGVAFSAFACGYDFYA. Over 67–72 the chain is Lumenal; sequence PFPKSK. Residues 73–93 form a helical membrane-spanning segment; it reads IVLLVCSVSYFICMGVLQLFQ. The Cytoplasmic segment spans residues 94 to 180; it reads WYVEKDCFYE…LWARLIRSEQ (87 aa).

Belongs to the SPCS2 family. As to quaternary structure, component of the signal peptidase complex (SPC) composed of a catalytic subunit sec-11 and three accessory subunits spcs-1, spcs-2 and spcs-3. The complex induces a local thinning of the ER membrane which is used to measure the length of the signal peptide (SP) h-region of protein substrates. This ensures the selectivity of the complex towards h-regions shorter than 18-20 amino acids.

It localises to the endoplasmic reticulum membrane. Its function is as follows. Component of the signal peptidase complex (SPC) which catalyzes the cleavage of N-terminal signal sequences from nascent proteins as they are translocated into the lumen of the endoplasmic reticulum. Enhances the enzymatic activity of SPC and facilitates the interactions between different components of the translocation site. This chain is Signal peptidase complex subunit 2, found in Caenorhabditis briggsae.